Consider the following 198-residue polypeptide: Recombination protein RecR (198 aa).

A C4-type zinc finger spans residues 56–71; sequence CGVCGNVDTSNPCGIC. A Toprim domain is found at 79–174; sequence RSICVVEEVA…RVTQLAHGLP (96 aa).

The protein belongs to the RecR family.

Functionally, may play a role in DNA repair. It seems to be involved in an RecBC-independent recombinational process of DNA repair. It may act with RecF and RecO. In Novosphingobium aromaticivorans (strain ATCC 700278 / DSM 12444 / CCUG 56034 / CIP 105152 / NBRC 16084 / F199), this protein is Recombination protein RecR.